The following is a 412-amino-acid chain: Argininosuccinate synthase (412 aa).

ATP-binding positions include 16–24 (AYSGGLDTS) and Ala-44. Residues Tyr-96 and Ser-101 each contribute to the L-citrulline site. Gly-126 contacts ATP. Residues Thr-128, Asn-132, and Asp-133 each coordinate L-aspartate. Asn-132 serves as a coordination point for L-citrulline. L-citrulline-binding residues include Arg-136, Ser-185, Ser-194, Glu-270, and Tyr-282.

It belongs to the argininosuccinate synthase family. Type 1 subfamily. In terms of assembly, homotetramer.

The protein resides in the cytoplasm. It catalyses the reaction L-citrulline + L-aspartate + ATP = 2-(N(omega)-L-arginino)succinate + AMP + diphosphate + H(+). The protein operates within amino-acid biosynthesis; L-arginine biosynthesis; L-arginine from L-ornithine and carbamoyl phosphate: step 2/3. The chain is Argininosuccinate synthase from Shewanella baltica (strain OS185).